The sequence spans 190 residues: Jupiter microtubule associated homolog 2 (190 aa).

At M1 the chain carries N-acetylmethionine. Positions 1-190 (MFQVPDSEGG…PGGKSSISFY (190 aa)) are disordered. At S30 the chain carries Phosphoserine. T35 carries the post-translational modification Phosphothreonine. A compositionally biased stretch (polar residues) spans 35–44 (TPSSRPNRMA). 3 positions are modified to phosphoserine: S45, S69, and S97. The segment covering 110 to 129 (KPKDHVFLCEGEEPKSDLKA) has biased composition (basic and acidic residues). Residues S132 and S144 each carry the phosphoserine modification. A compositionally biased stretch (basic and acidic residues) spans 139–167 (PGEKGSARKAGPAKEQEPMPTVDSHEPRL).

This sequence belongs to the JUPITER family. Monomer. Dimer. Interacts with TPCN1. As to expression, expressed in liver, kidney, prostate, testis and uterus.

The protein localises to the cytoplasm. Its subcellular location is the nucleus. Its function is as follows. Nicotinic acid adenine dinucleotide phosphate (NAADP) binding protein required for NAADP-evoked intracellular calcium release. Confers NAADP-sensitivity to the two pore channels (TPCs) complex. Enables NAADP to activate Ca(2+) release from the endoplasmic reticulum through ryanodine receptors. Functionally, (Microbial infection) Involved in the endolysosomal trafficking of human coronavirus SARS-CoV-2. The chain is Jupiter microtubule associated homolog 2 from Homo sapiens (Human).